A 234-amino-acid polypeptide reads, in one-letter code: LexA repressor (234 aa).

A DNA-binding region (H-T-H motif) is located at residues 26-46 (FDEMKDALDLRSKSGIHRLIT). The interval 80-107 (RGFTPSVIEGNLGKVRPPSPQHAEDDSD) is disordered. Catalysis depends on for autocatalytic cleavage activity residues Ser155 and Lys193.

It belongs to the peptidase S24 family. In terms of assembly, homodimer.

The enzyme catalyses Hydrolysis of Ala-|-Gly bond in repressor LexA.. Its function is as follows. Represses a number of genes involved in the response to DNA damage (SOS response), including recA and lexA. In the presence of single-stranded DNA, RecA interacts with LexA causing an autocatalytic cleavage which disrupts the DNA-binding part of LexA, leading to derepression of the SOS regulon and eventually DNA repair. The protein is LexA repressor of Rhodopseudomonas palustris (strain HaA2).